The sequence spans 425 residues: Kynurenine/alpha-aminoadipate aminotransferase, mitochondrial (425 aa).

The N-terminal 29 residues, 1–29, are a transit peptide targeting the mitochondrion; sequence MNYARFITAASAARNPSPIRTMTDILSRG. A substrate-binding site is contributed by Arg-20. Lys-69 bears the N6-acetyllysine mark. Substrate-binding residues include Tyr-74 and Tyr-142. Lys-179 is subject to N6-acetyllysine. Residues 181 to 208 form a disordered region; the sequence is EDAKNPQKNTPKFLYTVPNGNNPTGNSL. Over residues 198-208 the composition is skewed to polar residues; that stretch reads PNGNNPTGNSL. Asn-202 provides a ligand contact to substrate. Lys-263 is subject to N6-(pyridoxal phosphate)lysine; alternate. N6-acetyllysine; alternate occurs at positions 263, 339, and 367. Lys-263, Lys-339, and Lys-367 each carry N6-succinyllysine; alternate. Residue Arg-399 participates in substrate binding. Lys-422 is subject to N6-acetyllysine.

This sequence belongs to the class-I pyridoxal-phosphate-dependent aminotransferase family. As to quaternary structure, homodimer. It depends on pyridoxal 5'-phosphate as a cofactor. As to expression, higher expression in the liver. Also found in heart, brain, kidney, pancreas, prostate, testis and ovary.

The protein localises to the mitochondrion. It carries out the reaction glycine + 2-oxoglutarate = glyoxylate + L-glutamate. The enzyme catalyses L-kynurenine + 2-oxoglutarate = kynurenate + L-glutamate + H2O. It catalyses the reaction L-kynurenine + glyoxylate = kynurenate + glycine + H2O. The catalysed reaction is 3-hydroxy-L-kynurenine + glyoxylate = xanthurenate + glycine + H2O. It carries out the reaction 2-oxohexanoate + L-kynurenine = L-2-aminohexanoate + kynurenate + H2O. The enzyme catalyses 3-phenylpyruvate + L-kynurenine = kynurenate + L-phenylalanine + H2O. It catalyses the reaction 4-methylsulfanyl-2-oxobutanoate + L-kynurenine = kynurenate + L-methionine + H2O. The catalysed reaction is 2-oxo-3-sulfanylpropanoate + L-kynurenine = kynurenate + L-cysteine + H2O. It carries out the reaction indole-3-pyruvate + L-kynurenine = kynurenate + L-tryptophan + H2O. The enzyme catalyses 2-oxopentanoate + L-kynurenine = L-2-aminopentanoate + kynurenate + H2O. It catalyses the reaction 4-methyl-2-oxopentanoate + L-kynurenine = kynurenate + L-leucine + H2O. The catalysed reaction is L-2-aminoadipate + 2-oxoglutarate = 2-oxoadipate + L-glutamate. It carries out the reaction glyoxylate + L-methionine = 4-methylsulfanyl-2-oxobutanoate + glycine. The enzyme catalyses L-2-aminoadipate + glyoxylate = 2-oxoadipate + glycine. It catalyses the reaction L-tyrosine + glyoxylate = 3-(4-hydroxyphenyl)pyruvate + glycine. The catalysed reaction is glyoxylate + L-phenylalanine = 3-phenylpyruvate + glycine. It carries out the reaction L-tryptophan + glyoxylate = indole-3-pyruvate + glycine. The enzyme catalyses L-leucine + glyoxylate = 4-methyl-2-oxopentanoate + glycine. It catalyses the reaction 2-oxobutanoate + L-kynurenine = (2S)-2-aminobutanoate + kynurenate + H2O. The catalysed reaction is 2-oxoadipate + L-kynurenine = L-2-aminoadipate + kynurenate + H2O. Its pathway is amino-acid degradation; L-lysine degradation via saccharopine pathway; glutaryl-CoA from L-lysine: step 4/6. With respect to regulation, kynurenine transaminase activity is competitively inhibited by aminoadipate, asparagine, glutamate, histidine, cysteine, lysine, 3-hydroxy-kynurenine and phenylalanine. In terms of biological role, transaminase with broad substrate specificity. Has transaminase activity towards aminoadipate, kynurenine, methionine and glutamate. Shows activity also towards tryptophan, aspartate and hydroxykynurenine. Accepts a variety of oxo-acids as amino-group acceptors, with a preference for 2-oxoglutarate, 2-oxocaproic acid, phenylpyruvate and alpha-oxo-gamma-methiol butyric acid. Can also use glyoxylate as amino-group acceptor (in vitro). The chain is Kynurenine/alpha-aminoadipate aminotransferase, mitochondrial from Homo sapiens (Human).